The primary structure comprises 44 residues: Protein PsbN (44 aa).

The helical transmembrane segment at 6–26 (FFFTIFLWCLLLSITGYSIYV) threads the bilayer.

The protein belongs to the PsbN family.

Its subcellular location is the plastid. It localises to the chloroplast thylakoid membrane. In terms of biological role, may play a role in photosystem I and II biogenesis. The protein is Protein PsbN of Chlorella vulgaris (Green alga).